The primary structure comprises 355 residues: Phosphoribosylformylglycinamidine cyclo-ligase (355 aa).

The protein belongs to the AIR synthase family.

The protein resides in the cytoplasm. The enzyme catalyses 2-formamido-N(1)-(5-O-phospho-beta-D-ribosyl)acetamidine + ATP = 5-amino-1-(5-phospho-beta-D-ribosyl)imidazole + ADP + phosphate + H(+). The protein operates within purine metabolism; IMP biosynthesis via de novo pathway; 5-amino-1-(5-phospho-D-ribosyl)imidazole from N(2)-formyl-N(1)-(5-phospho-D-ribosyl)glycinamide: step 2/2. The chain is Phosphoribosylformylglycinamidine cyclo-ligase from Paraburkholderia phymatum (strain DSM 17167 / CIP 108236 / LMG 21445 / STM815) (Burkholderia phymatum).